A 502-amino-acid polypeptide reads, in one-letter code: Glycerol kinase (502 aa).

ADP is bound at residue T13. Positions 13, 14, and 15 each coordinate ATP. Position 13 (T13) interacts with sn-glycerol 3-phosphate. R17 serves as a coordination point for ADP. Positions 83, 84, 136, and 246 each coordinate sn-glycerol 3-phosphate. Glycerol is bound by residues R83, E84, Y136, D246, and Q247. Residues T268 and G311 each coordinate ADP. Residues T268, G311, Q315, and G412 each contribute to the ATP site. ADP contacts are provided by G412 and N416.

This sequence belongs to the FGGY kinase family.

The catalysed reaction is glycerol + ATP = sn-glycerol 3-phosphate + ADP + H(+). Its pathway is polyol metabolism; glycerol degradation via glycerol kinase pathway; sn-glycerol 3-phosphate from glycerol: step 1/1. Its activity is regulated as follows. Inhibited by fructose 1,6-bisphosphate (FBP). Its function is as follows. Key enzyme in the regulation of glycerol uptake and metabolism. Catalyzes the phosphorylation of glycerol to yield sn-glycerol 3-phosphate. The sequence is that of Glycerol kinase from Francisella tularensis subsp. tularensis (strain FSC 198).